Reading from the N-terminus, the 173-residue chain is Inorganic pyrophosphatase (173 aa).

Substrate is bound by residues K28, R42, and Y54. D64, D69, and D101 together coordinate Mg(2+). Position 140 (Y140) interacts with substrate.

Belongs to the PPase family. Homohexamer. The cofactor is Mg(2+).

The protein localises to the cytoplasm. It carries out the reaction diphosphate + H2O = 2 phosphate + H(+). Catalyzes the hydrolysis of inorganic pyrophosphate (PPi) forming two phosphate ions. The protein is Inorganic pyrophosphatase of Helicobacter pylori (strain J99 / ATCC 700824) (Campylobacter pylori J99).